The primary structure comprises 222 residues: uncharacterized protein (222 aa).

This is an uncharacterized protein from Pyrococcus woesei.